Reading from the N-terminus, the 160-residue chain is UPF0479 membrane protein YER190C-B (160 aa).

2 helical membrane passes run 39-59 (IVFC…KVLQ) and 136-156 (VPMI…ISQH).

It belongs to the UPF0479 family.

The protein resides in the membrane. The chain is UPF0479 membrane protein YER190C-B from Saccharomyces cerevisiae (strain ATCC 204508 / S288c) (Baker's yeast).